A 64-amino-acid chain; its full sequence is uncharacterized protein (64 aa).

A helical membrane pass occupies residues 33–55; that stretch reads YTPLGSYMIFGIVHYFCSYHIGI.

It is found in the membrane. This is an uncharacterized protein from Saccharomyces cerevisiae (strain ATCC 204508 / S288c) (Baker's yeast).